The primary structure comprises 336 residues: Phenylalanine--tRNA ligase alpha subunit (336 aa).

A Mg(2+)-binding site is contributed by Glu251.

Belongs to the class-II aminoacyl-tRNA synthetase family. Phe-tRNA synthetase alpha subunit type 1 subfamily. Tetramer of two alpha and two beta subunits. It depends on Mg(2+) as a cofactor.

The protein localises to the cytoplasm. The catalysed reaction is tRNA(Phe) + L-phenylalanine + ATP = L-phenylalanyl-tRNA(Phe) + AMP + diphosphate + H(+). The protein is Phenylalanine--tRNA ligase alpha subunit of Syntrophobacter fumaroxidans (strain DSM 10017 / MPOB).